The sequence spans 77 residues: U8-lycotoxin-Ls1g (77 aa).

Positions 1–20 (MKLIIFTGLVLFAIVSLIEV) are cleaved as a signal peptide. Residues 21–26 (QADNER) constitute a propeptide that is removed on maturation.

The protein belongs to the neurotoxin 19 (CSTX) family. 08 (U8-Lctx) subfamily. In terms of processing, contains 4 disulfide bonds. In terms of tissue distribution, expressed by the venom gland.

The protein localises to the secreted. The chain is U8-lycotoxin-Ls1g from Lycosa singoriensis (Wolf spider).